Consider the following 230-residue polypeptide: Phosphoglycolate phosphatase (230 aa).

D9 acts as the Nucleophile in catalysis. D9, D11, and D175 together coordinate Mg(2+).

This sequence belongs to the HAD-like hydrolase superfamily. CbbY/CbbZ/Gph/YieH family. Mg(2+) is required as a cofactor.

It catalyses the reaction 2-phosphoglycolate + H2O = glycolate + phosphate. The protein operates within organic acid metabolism; glycolate biosynthesis; glycolate from 2-phosphoglycolate: step 1/1. In terms of biological role, specifically catalyzes the dephosphorylation of 2-phosphoglycolate. Is involved in the dissimilation of the intracellular 2-phosphoglycolate formed during the DNA repair of 3'-phosphoglycolate ends, a major class of DNA lesions induced by oxidative stress. This Psychrobacter arcticus (strain DSM 17307 / VKM B-2377 / 273-4) protein is Phosphoglycolate phosphatase.